A 646-amino-acid polypeptide reads, in one-letter code: MSNNLFTVPEDWQKRAWCDDARYQKMYDESVNDPDAFWSREAQRIDWFEPFSKVKNSSFNGDVDIKWFLDGKLNVAYNCLDRHLEKRGDQTAIIFEGNEPGVEEKITYRQLYERVCRFSNVLKSCGVKKGDRVSIYLPMIPQLAVAMLACARIGAIHSIVFAGFSPDALANRITDAECTILITADEGLRGPKAIGLKEAADEAMDKAGMVKKCIVVKHTGADVPMKAGRDLWWHELTAKESTECPPESMDSEDPLFILYTSGSTGTPKGVLHTTGGYIVYTSLTHQYVFDYHDGDIYWCTADIGWVTGHSYIIYGPLANGAVTIMFEGIPNYPDFSRFWQICDKHQVNIFYTAPTVVRALMQQGDEPVKATSRTSVRLLGTVGEPINPEAWLWYHRVVGEERCPIVDTWWQTETGGIMITPLPGATALKPGSATRPFFGIQPALIDKEGNQLEGPGEGYLVMLDSWPALARTVYGDHRRFKSTYFIQCPGTYFSGDGARRDEDGYYWITGRIDDVINVSGHRLGTAEIESSLVAHPAVSEAAVVGFPHDIKGQAIYAYVTLSSGYEPSEELRKELSLFVRKDIGPIATPEVLQFTDSLPKTRSGKIMRRILRKVACNELDNLGDTSTLADPAVVEALIKNRIDACR.

CoA-binding positions include 189–192 (RGPK), threonine 307, and asparagine 331. Residues 383–385 (GEP), 407–412 (DTWWQT), aspartate 496, and arginine 511 contribute to the ATP site. Serine 519 is a CoA binding site. Arginine 522 contacts ATP. Mg(2+)-binding residues include valine 533, histidine 535, and valine 538. Arginine 580 lines the CoA pocket. Position 605 is an N6-acetyllysine (lysine 605).

Belongs to the ATP-dependent AMP-binding enzyme family. Requires Mg(2+) as cofactor. Acetylated. Deacetylation by the SIR2-homolog deacetylase activates the enzyme.

The enzyme catalyses acetate + ATP + CoA = acetyl-CoA + AMP + diphosphate. Its function is as follows. Catalyzes the conversion of acetate into acetyl-CoA (AcCoA), an essential intermediate at the junction of anabolic and catabolic pathways. AcsA undergoes a two-step reaction. In the first half reaction, AcsA combines acetate with ATP to form acetyl-adenylate (AcAMP) intermediate. In the second half reaction, it can then transfer the acetyl group from AcAMP to the sulfhydryl group of CoA, forming the product AcCoA. This Desulfatibacillum aliphaticivorans protein is Acetyl-coenzyme A synthetase.